Consider the following 326-residue polypeptide: Transposase InsH for insertion sequence element IS5H (326 aa).

This sequence belongs to the transposase 11 family.

Its function is as follows. Involved in the transposition of the insertion sequence IS5. The protein is Transposase InsH for insertion sequence element IS5H (insH6) of Escherichia coli (strain K12).